A 237-amino-acid chain; its full sequence is Pre-protein VI (237 aa).

The propeptide occupies 1-32 (MDDPFSTLAPRRGTQPLLSNWATIGISELHGG). Residues 33 to 57 (ALGWGSWWSNLSRLGSSFGSNLKNL) are amphipathic alpha-helix essential for membrane lytic activity. Positions 35–56 (GWGSWWSNLSRLGSSFGSNLKN) are involved in endosomal membrane lysis. Residues 51–77 (GSNLKNLGLKAWNSSTGQALRQHLKDT) form an interaction with hexon protein region. The Nuclear export signal signature appears at 70–79 (LRQHLKDTNL). T146 carries the post-translational modification Phosphothreonine; by host. The Nuclear export signal signature appears at 218-229 (GTLDSIMGLGLQ). The interval 220-226 (LDSIMGL) is interaction with hexon protein. The binds to importin alpha/beta, involved in hexon nuclear import stretch occupies residues 227-237 (GLQPIKRRRCF). Residues 232–235 (KRRR) carry the Nuclear localization signal motif.

This sequence belongs to the adenoviridae protein VI family. Interacts with hexon protein; this interaction allows nuclear import of hexon trimers and possibly pre-capsid assembly. Interacts (via C-terminal NLS) with importin alpha/beta. In terms of assembly, interacts (via PPxY motif) with host NEDD4 ubiquitine ligase; this interaction might play a role in virus intracellular transport during entry. Part of a complex composed of the core-capsid bridging protein, the endosome lysis protein VI and the hexon-linking protein VIII; these interactions bridge the virus core to the capsid. Interacts with peripentonal hexons; this interaction stabilizes the capsid by gluing two peripentonal hexons together and joining them with an adjacent group-of-nine hexon. As to quaternary structure, heterodimer with the viral protease; disulfide-linked. Interacts with the viral protease. In terms of processing, ubiquitinated by Nedd4 following partial capsid disassembly; which might play a role in intracellular virus movement during entry. Post-translationally, contains the major nuclear import and export signals. Proteolytically removed during virion maturation. The processing of the C-terminus turns the precursor into a mature viral structural protein and abrogates its ability to promote hexon import and act as a potential chaperone protein.

The protein resides in the host nucleus. It localises to the host cytoplasm. It is found in the virion. Functionally, during virus assembly, promotes hexon trimers nuclear import through nuclear pore complexes via an importin alpha/beta-dependent mechanism. By analogy to herpesviruses capsid assembly, might act as a chaperone to promote the formation of the icosahedral capsid. Structural component of the virion that provides increased stability to the particle shell through its interaction with the core-capsid bridging protein and the hexon-linking protein VIII. Fibers shedding during virus entry into host cell allows the endosome lysis protein to be exposed as a membrane-lytic peptide. Exhibits pH-independent membrane fragmentation activity and probably mediates viral rapid escape from host endosome via organellar membrane lysis. It is not clear if it then remains partially associated with the capsid and involved in the intracellular microtubule-dependent transport of capsid to the nucleus, or if it is lost during endosomal penetration. Its function is as follows. Cofactor that activates the viral protease. Binds to viral protease in a 1:1 ratio. In Mus musculus (Mouse), this protein is Pre-protein VI.